Consider the following 547-residue polypeptide: Inactive delta-guaiene synthase (547 aa).

Mg(2+) contacts are provided by aspartate 299, aspartate 303, and aspartate 444. A DDXXD motif motif is present at residues 299–303 (DDTYD).

This sequence belongs to the terpene synthase family. It depends on Mg(2+) as a cofactor.

This chain is Inactive delta-guaiene synthase (C1), found in Aquilaria crassna (Eagle wood).